A 347-amino-acid polypeptide reads, in one-letter code: Ribosomal RNA large subunit methyltransferase M (347 aa).

S-adenosyl-L-methionine-binding positions include Ser-184, 217–220 (APGG), Asp-236, Asp-256, and Asp-272. Catalysis depends on Lys-301, which acts as the Proton acceptor.

This sequence belongs to the class I-like SAM-binding methyltransferase superfamily. RNA methyltransferase RlmE family. RlmM subfamily. In terms of assembly, monomer.

It is found in the cytoplasm. The enzyme catalyses cytidine(2498) in 23S rRNA + S-adenosyl-L-methionine = 2'-O-methylcytidine(2498) in 23S rRNA + S-adenosyl-L-homocysteine + H(+). In terms of biological role, catalyzes the 2'-O-methylation at nucleotide C2498 in 23S rRNA. The polypeptide is Ribosomal RNA large subunit methyltransferase M (Xanthomonas axonopodis pv. citri (strain 306)).